Consider the following 294-residue polypeptide: MRFVIVTGLSGAGKTQAIRSLEDLGYFCIDNLPPALIPKFAQVCYESESKINKIALVIDIRGGEFFDNLFESLKYLKEAGYKYEILFLDADNEVLIKRFKESRRKHPLAPNGRILNGIQMERKKLKTLYNMANNVIDTSKLATRELREKINSIYQEEGQIESKLIVTVVSFGFKYGIPVDSDLVFDVRFLPNPFYIPELKRFSGIEKPVKDYVMSFDQTKEFVNKIEQLLKFLIPNYLKEGKRQLIVSIGCTGGRHRSVTIANEIYERLKNDGETVNIDHRDIEEDINKGGKKL.

8-15 (GLSGAGKT) is a binding site for ATP. 59–62 (DIRG) contributes to the GTP binding site.

It belongs to the RapZ-like family.

In terms of biological role, displays ATPase and GTPase activities. The protein is Nucleotide-binding protein CA_C0511 of Clostridium acetobutylicum (strain ATCC 824 / DSM 792 / JCM 1419 / IAM 19013 / LMG 5710 / NBRC 13948 / NRRL B-527 / VKM B-1787 / 2291 / W).